The following is a 212-amino-acid chain: B3 domain-containing protein Os04g0386900 (212 aa).

The segment at 1–78 is disordered; that stretch reads MRAATALPSI…PRPPEPEPEK (78 aa). Composition is skewed to low complexity over residues 8–23 and 36–46; these read PSIP…ASDP and DAGAEDPAAVD. The segment at residues 93–191 is a DNA-binding region (TF-B3); that stretch reads FTCIMCKSHV…EFRVQVLRAE (99 aa).

The protein resides in the nucleus. The chain is B3 domain-containing protein Os04g0386900 from Oryza sativa subsp. japonica (Rice).